Here is a 264-residue protein sequence, read N- to C-terminus: Energy-coupling factor transporter ATP-binding protein EcfA1 (264 aa).

The ABC transporter domain maps to 2 to 234 (IQVENLSFSY…DEFNPFLIKI (233 aa)). Position 34 to 41 (34 to 41 (GKNGSGKS)) interacts with ATP.

The protein belongs to the ABC transporter superfamily. Energy-coupling factor EcfA family. As to quaternary structure, forms a stable energy-coupling factor (ECF) transporter complex composed of 2 membrane-embedded substrate-binding proteins (S component), 2 ATP-binding proteins (A component) and 2 transmembrane proteins (T component).

It localises to the cell inner membrane. In terms of biological role, ATP-binding (A) component of a common energy-coupling factor (ECF) ABC-transporter complex. Unlike classic ABC transporters this ECF transporter provides the energy necessary to transport a number of different substrates. This Fusobacterium nucleatum subsp. nucleatum (strain ATCC 25586 / DSM 15643 / BCRC 10681 / CIP 101130 / JCM 8532 / KCTC 2640 / LMG 13131 / VPI 4355) protein is Energy-coupling factor transporter ATP-binding protein EcfA1.